The primary structure comprises 207 residues: Large ribosomal subunit protein uL4 (207 aa).

The disordered stretch occupies residues 48-75 (THAVKNRSAVSGGGRKPWKQKGTGRARA).

This sequence belongs to the universal ribosomal protein uL4 family. In terms of assembly, part of the 50S ribosomal subunit.

Its function is as follows. One of the primary rRNA binding proteins, this protein initially binds near the 5'-end of the 23S rRNA. It is important during the early stages of 50S assembly. It makes multiple contacts with different domains of the 23S rRNA in the assembled 50S subunit and ribosome. Forms part of the polypeptide exit tunnel. The polypeptide is Large ribosomal subunit protein uL4 (Leuconostoc citreum (strain KM20)).